Consider the following 574-residue polypeptide: Septation ring formation regulator EzrA (574 aa).

The Extracellular portion of the chain corresponds to 1–7 (MSIGLVI). A helical transmembrane segment spans residues 8-26 (LVAVVALLLVVGYGTAVLM). Coiled coils occupy residues 26 to 47 (MRKRNEALLQNLEERKEALYNL), 105 to 189 (KAKH…QFVT), 258 to 346 (ESRF…FLIS), 375 to 415 (SETK…IEKD), and 455 to 494 (STSNNIEELVKELEATRVNIESVNRWLEILGNDMEQLEEE). Residues 27–574 (RKRNEALLQN…YEKTRENIRF (548 aa)) are Cytoplasmic-facing.

It belongs to the EzrA family.

The protein resides in the cell membrane. Functionally, negative regulator of FtsZ ring formation; modulates the frequency and position of FtsZ ring formation. Inhibits FtsZ ring formation at polar sites. Interacts either with FtsZ or with one of its binding partners to promote depolymerization. The polypeptide is Septation ring formation regulator EzrA (Streptococcus sanguinis (strain SK36)).